Here is a 236-residue protein sequence, read N- to C-terminus: Purine nucleoside phosphorylase DeoD-type (236 aa).

Histidine 5 contacts a purine D-ribonucleoside. Phosphate is bound by residues glycine 21, arginine 25, arginine 44, and 88–91 (RVGT). A purine D-ribonucleoside contacts are provided by residues 180–182 (EME) and 204–205 (SD). The active-site Proton donor is the aspartate 205.

The protein belongs to the PNP/UDP phosphorylase family. As to quaternary structure, homohexamer; trimer of homodimers.

The enzyme catalyses a purine D-ribonucleoside + phosphate = a purine nucleobase + alpha-D-ribose 1-phosphate. It carries out the reaction a purine 2'-deoxy-D-ribonucleoside + phosphate = a purine nucleobase + 2-deoxy-alpha-D-ribose 1-phosphate. In terms of biological role, catalyzes the reversible phosphorolytic breakdown of the N-glycosidic bond in the beta-(deoxy)ribonucleoside molecules, with the formation of the corresponding free purine bases and pentose-1-phosphate. This Shewanella sp. (strain MR-4) protein is Purine nucleoside phosphorylase DeoD-type.